The primary structure comprises 332 residues: Cell division protein ZipA (332 aa).

The Periplasmic segment spans residues 1-6 (MMQDLR). The helical transmembrane segment at 7–27 (LILIVVGAIAIIALLLHGLWT) threads the bilayer. Topologically, residues 28–332 (SRKERSSLFR…RLREVLENNA (305 aa)) are cytoplasmic. Basic and acidic residues-rich tracts occupy residues 34-51 (SLFR…REQS) and 61-72 (GEVRVRSAHPED). The interval 34–184 (SLFRDRPAKR…PAVAHEPQPA (151 aa)) is disordered. The span at 98 to 107 (PAPRAVQPAA) shows a compositional bias: low complexity. The span at 121-136 (DDILLDNYAQEEDDEP) shows a compositional bias: acidic residues. Residues 155–171 (PAAEPAFHAEPAHQPQP) show a composition bias toward low complexity.

Belongs to the ZipA family. Interacts with FtsZ via their C-terminal domains.

It localises to the cell inner membrane. Essential cell division protein that stabilizes the FtsZ protofilaments by cross-linking them and that serves as a cytoplasmic membrane anchor for the Z ring. Also required for the recruitment to the septal ring of downstream cell division proteins. The polypeptide is Cell division protein ZipA (Serratia proteamaculans (strain 568)).